The primary structure comprises 342 residues: Phosphatidate cytidylyltransferase, mitochondrial (342 aa).

It belongs to the TAM41 family. It depends on Mg(2+) as a cofactor. Co(2+) is required as a cofactor. The cofactor is Cu(2+).

It localises to the mitochondrion inner membrane. It catalyses the reaction a 1,2-diacyl-sn-glycero-3-phosphate + CTP + H(+) = a CDP-1,2-diacyl-sn-glycerol + diphosphate. It functions in the pathway phospholipid metabolism; CDP-diacylglycerol biosynthesis; CDP-diacylglycerol from sn-glycerol 3-phosphate: step 3/3. Catalyzes the formation of CDP-diacylglycerol (CDP-DAG) from phosphatidic acid (PA) in the mitochondrial inner membrane. Required for the biosynthesis of the dimeric phospholipid cardiolipin, which stabilizes supercomplexes of the mitochondrial respiratory chain in the mitochondrial inner membrane. The polypeptide is Phosphatidate cytidylyltransferase, mitochondrial (Drosophila melanogaster (Fruit fly)).